Here is a 660-residue protein sequence, read N- to C-terminus: Genome-linked protein precursor (660 aa).

The signal sequence occupies residues 1–25 (MALLGIKLMTLVFAAWLSCCHSSSA). Transmembrane regions (helical) follow at residues 131–151 (AVGMLLMIIIWIWSSIFLVVY) and 165–185 (AVCVGFLIFCTICAFRLISWI). The Peptidase S39 domain occupies 224-416 (VEGYKPFIIP…GLTSPDFKFE (193 aa)). Active-site for protease activity residues include His-272, Asp-304, and Ser-373. 2 disordered regions span residues 463–490 (EEESESDDERGKVVPPAKPSNYGEGCPP) and 595–660 (TKAP…AWVR).

It belongs to the peptidase S39B family.

It localises to the host membrane. In terms of biological role, precursor from which the VPg molecule is probably released at the onset of the RNA synthesis. Essential for virus replication. In Euphorbia pulcherrima (Poinsettia), this protein is Genome-linked protein precursor.